The primary structure comprises 151 residues: Transcription factor ATOH7 (151 aa).

The bHLH domain maps to 39–91; it reads KRRLAANARERRRMQGLNTAFDRLRKVVPQWGQDKKLSKYETLQMALSYIMAL.

The protein localises to the nucleus. It localises to the perikaryon. It is found in the cell projection. Its subcellular location is the axon. In terms of biological role, transcription factor that binds to DNA at the consensus sequence 5'-CAG[GC]TG-3'. Positively regulates the determination of retinal ganglion cell fate and formation of the optic nerve and retino-hypothalamic tract. Required for retinal circadian rhythm photoentrainment. Plays a role in brainstem auditory signaling and binaural processing. During retinal neurogenesis, activates its own transcription, as well as the transcription of CHRNB3 and BRN3. This is Transcription factor ATOH7 from Gallus gallus (Chicken).